Consider the following 251-residue polypeptide: Isopentenyl-diphosphate delta-isomerase (251 aa).

Residue K49 coordinates substrate. Mg(2+) contacts are provided by H53 and H66. Residues 64–212 (LLHRAFSVFL…SNSFTPWFKL (149 aa)) form the Nudix hydrolase domain. Residues R86 and K90 each coordinate substrate. C102 is a catalytic residue. S103 is a binding site for substrate. Positions 162 and 164 each coordinate Mg(2+). E164 is a catalytic residue.

It belongs to the IPP isomerase type 1 family. It depends on Mg(2+) as a cofactor.

Its subcellular location is the cytoplasm. The enzyme catalyses isopentenyl diphosphate = dimethylallyl diphosphate. Its pathway is isoprenoid biosynthesis; dimethylallyl diphosphate biosynthesis; dimethylallyl diphosphate from isopentenyl diphosphate: step 1/1. Isopentenyl-diphosphate delta-isomerase; part of the second module of ergosterol biosynthesis pathway that includes the middle steps of the pathway. The second module is carried out in the vacuole and involves the formation of farnesyl diphosphate, which is also an important intermediate in the biosynthesis of ubiquinone, dolichol, heme and prenylated proteins. Activity by the mevalonate kinase first converts mevalonate into 5-phosphomevalonate. 5-phosphomevalonate is then further converted to 5-diphosphomevalonate by the phosphomevalonate kinase. The diphosphomevalonate decarboxylase then produces isopentenyl diphosphate. The isopentenyl-diphosphate delta-isomerase then catalyzes the 1,3-allylic rearrangement of the homoallylic substrate isopentenyl (IPP) to its highly electrophilic allylic isomer, dimethylallyl diphosphate (DMAPP). Finally the farnesyl diphosphate synthase catalyzes the sequential condensation of isopentenyl pyrophosphate with dimethylallyl pyrophosphate, and then with the resultant geranylpyrophosphate to the ultimate product farnesyl pyrophosphate. The sequence is that of Isopentenyl-diphosphate delta-isomerase from Phaffia rhodozyma (Yeast).